A 101-amino-acid polypeptide reads, in one-letter code: Large ribosomal subunit protein eL43 (101 aa).

Cysteine 40, cysteine 43, cysteine 59, and cysteine 62 together coordinate Zn(2+). The C4-type zinc-finger motif lies at 40 to 62; that stretch reads CPSCRSLVRLERIAFGIWRCPKC.

This sequence belongs to the eukaryotic ribosomal protein eL43 family. Putative zinc-binding subfamily. Part of the 50S ribosomal subunit. Requires Zn(2+) as cofactor.

Its function is as follows. Binds to the 23S rRNA. The polypeptide is Large ribosomal subunit protein eL43 (Pyrobaculum aerophilum (strain ATCC 51768 / DSM 7523 / JCM 9630 / CIP 104966 / NBRC 100827 / IM2)).